The chain runs to 332 residues: Glycerol-3-phosphate dehydrogenase [NAD(P)+] 2 (332 aa).

Residues Ser17, Trp18, Arg37, and Lys112 each coordinate NADPH. Sn-glycerol 3-phosphate is bound by residues Lys112 and Gly140. Ala144 is a binding site for NADPH. Lys195, Asp243, Ser253, Arg254, and Asn255 together coordinate sn-glycerol 3-phosphate. Lys195 serves as the catalytic Proton acceptor. Arg254 is a binding site for NADPH. Val278 and Glu280 together coordinate NADPH.

Belongs to the NAD-dependent glycerol-3-phosphate dehydrogenase family.

It localises to the cytoplasm. It carries out the reaction sn-glycerol 3-phosphate + NAD(+) = dihydroxyacetone phosphate + NADH + H(+). It catalyses the reaction sn-glycerol 3-phosphate + NADP(+) = dihydroxyacetone phosphate + NADPH + H(+). It participates in membrane lipid metabolism; glycerophospholipid metabolism. Catalyzes the reduction of the glycolytic intermediate dihydroxyacetone phosphate (DHAP) to sn-glycerol 3-phosphate (G3P), the key precursor for phospholipid synthesis. This Mycolicibacterium paratuberculosis (strain ATCC BAA-968 / K-10) (Mycobacterium paratuberculosis) protein is Glycerol-3-phosphate dehydrogenase [NAD(P)+] 2.